The primary structure comprises 445 residues: Glutamyl-tRNA(Gln) amidotransferase subunit D (445 aa).

Residues 93–425 (SEIKIISTGG…EKIRSLMISN (333 aa)) form the Asparaginase/glutaminase domain. Active-site residues include Thr-103, Thr-179, Asp-180, and Lys-258.

Belongs to the asparaginase 1 family. GatD subfamily. Heterodimer of GatD and GatE.

The catalysed reaction is L-glutamyl-tRNA(Gln) + L-glutamine + ATP + H2O = L-glutaminyl-tRNA(Gln) + L-glutamate + ADP + phosphate + H(+). In terms of biological role, allows the formation of correctly charged Gln-tRNA(Gln) through the transamidation of misacylated Glu-tRNA(Gln) in organisms which lack glutaminyl-tRNA synthetase. The reaction takes place in the presence of glutamine and ATP through an activated gamma-phospho-Glu-tRNA(Gln). The GatDE system is specific for glutamate and does not act on aspartate. This is Glutamyl-tRNA(Gln) amidotransferase subunit D from Saccharolobus islandicus (strain M.16.27) (Sulfolobus islandicus).